The chain runs to 1476 residues: Cystic fibrosis transmembrane conductance regulator (1476 aa).

Residues 1–77 (MQKSPLEKAS…QLIHALRRCF (77 aa)) lie on the Cytoplasmic side of the membrane. A helical membrane pass occupies residues 78–98 (VWRFVFYGVLLYLGEVTKAVQ). Residues 81–365 (FVFYGVLLYL…TAVQIWYDSL (285 aa)) form the ABC transmembrane type-1 1 domain. Residues 99 to 122 (PVLLGRIIASYDPDNTEERSIAIY) are Extracellular-facing. A helical transmembrane segment spans residues 123 to 146 (LGIGLCLLFIVRTLLLHPAIFGLH). Topologically, residues 147–195 (HIGMQMRIAMFSLIYKKTLKLSSRVLDKISIGQLISLLSNNLNKFDEGL) are cytoplasmic. The helical transmembrane segment at 196-216 (ALAHFIWIAPLQVVLLMGLLW) threads the bilayer. Over 217 to 222 (DLLQFS) the chain is Extracellular. A helical membrane pass occupies residues 223 to 243 (AFCGLGLLIVLVIFQAILGKM). Residues 244–298 (MVKYRDKRAAKINERLVITSEVIDNIYSVKAYCWESAMEKIIESLREEELKMTRR) are Cytoplasmic-facing. A helical membrane pass occupies residues 299–319 (SAYMRFFTSSAFFFSGFFVVF). Residues 320 to 339 (LSVLPYTVINGIVLRKIFTT) are Extracellular-facing. The helical transmembrane segment at 340–358 (ISFCIVLRMSVTRQFPTAV) threads the bilayer. Over 359 to 853 (QIWYDSLGMI…YLRYFTLHRG (495 aa)) the chain is Cytoplasmic. ATP contacts are provided by residues W401, 458-465 (GSTGAGKT), and Q493. Residues 412–646 (VQLNNDDRKT…RPDFSSKLMG (235 aa)) enclose the ABC transporter 1 domain. The S-palmitoyl cysteine moiety is linked to residue C524. A phosphoserine mark is found at S549 and S660. The segment at 654 to 826 (TEERRSSILT…EEINEEDLKE (173 aa)) is disordered R region. At S670 the chain carries Phosphoserine; by PKA. Phosphoserine occurs at positions 684, 698, and 710. Position 715 is a phosphothreonine (T715). Phosphoserine occurs at positions 732, 763, 785, 790, and 808. A helical membrane pass occupies residues 854–874 (LFAVLIWCVLVFLVEVAASLF). Positions 854 to 1153 (LFAVLIWCVL…SSIDTDSLMR (300 aa)) constitute an ABC transmembrane type-1 2 domain. At 875-913 (VLWLLKNNPVNGGNNGTKIANTSYVVVITSSSFYYIFYI) the chain is on the extracellular side. N-linked (GlcNAc...) asparagine glycosylation is found at N889 and N895. Residues 914 to 934 (YVGVADTLLALSLFRGLPLVH) form a discontinuously helical membrane-spanning segment. Topologically, residues 935 to 985 (TLITASKILHRKMLHSILHAPMSTFNKLKAGGILNRFSKDIAILDDFLPLT) are cytoplasmic. Residues 986–1006 (IFDFIQLLFIVVGAIIVVSAL) form a helical membrane-spanning segment. Residues 1007–1008 (QP) lie on the Extracellular side of the membrane. Residues 1009–1029 (YIFLATVPGLAVFILLRAYFL) form a helical membrane-spanning segment. Topologically, residues 1030-1090 (HTSQQLKQLE…TANWFMYLAT (61 aa)) are cytoplasmic. The helical transmembrane segment at 1091–1111 (LRWFQMRIDMIFVLFFIVVTF) threads the bilayer. Residues 1112–1125 (ISILTTGEGEGTTG) lie on the Extracellular side of the membrane. The helical transmembrane segment at 1126 to 1146 (IILTLAMNIMSTLQWAVNSSI) threads the bilayer. The Cytoplasmic segment spans residues 1147–1476 (DTDSLMRSVS…TEEEVQETRL (330 aa)). Positions 1208-1439 (VKDLTVKYVD…KSVFQRALSS (232 aa)) constitute an ABC transporter 2 domain. ATP-binding positions include Y1215 and 1240-1247 (GRTGSGKS). The tract at residues 1382–1476 (RVLRQAFAGC…TEEEVQETRL (95 aa)) is interaction with GORASP2. The S-palmitoyl cysteine moiety is linked to residue C1391. 2 positions are modified to phosphoserine: S1440 and S1452. Basic residues predominate over residues 1445–1456 (LFHGRHSSKQKP). The segment at 1445–1476 (LFHGRHSSKQKPRTQITAVKEETEEEVQETRL) is disordered. Residues 1466-1476 (ETEEEVQETRL) show a composition bias toward acidic residues. The short motif at 1474-1476 (TRL) is the PDZ-binding element.

It belongs to the ABC transporter superfamily. ABCC family. CFTR transporter (TC 3.A.1.202) subfamily. In terms of assembly, monomer; does not require oligomerization for channel activity. May form oligomers in the membrane. Interacts with SLC4A7 through NHERF1. Interacts with SHANK2. Interacts with NHERF1 and MYO6. Interacts (via C-terminus) with GOPC (via PDZ domain); this promotes CFTR internalization and thereby decreases channel activity. Interacts with SLC4A7 through NHERF1. Found in a complex with MYO5B and RAB11A. Interacts with ANO1. Interacts with SLC26A8. Interacts with AHCYL1; the interaction increases CFTR activity. Interacts with CSE1L. The core-glycosylated form interacts with GORASP2 (via PDZ GRASP-type 1 domain) in respone to ER stress. Interacts with MARCHF2; the interaction leads to CFTR ubiqtuitination and degradation. Interacts with ADGRG2. N-glycosylated. In terms of processing, phosphorylated; cAMP treatment promotes phosphorylation and activates the channel. Dephosphorylation decreases the ATPase activity (in vitro). Phosphorylation at PKA sites activates the channel. Phosphorylation at PKC sites enhances the response to phosphorylation by PKA. Phosphorylated by AMPK; this inhibits channel activity. Post-translationally, ubiquitinated, leading to its degradation in the lysosome. Deubiquitination by USP10 in early endosomes enhances its endocytic recycling to the cell membrane. Ubiquitinated by RNF185 during ER stress. Ubiquitinated by MARCHF2. In terms of tissue distribution, detected in epithelial cells in nasopharynx, submandibular gland, pancreas and ileum (at protein level). Expressed in the epididymis. In the caput section of the epididymis, expressed uniformly on both the luminal and basolateral sides of the ducts and on sperm in the caput lumen (at protein level). In the cauda, detected along the luminal border but not continuously and is also expressed on the basolateral surface. Within the caudal lumen, detected on sperm.

The protein resides in the apical cell membrane. It localises to the early endosome membrane. It is found in the cell membrane. The protein localises to the recycling endosome membrane. Its subcellular location is the endoplasmic reticulum membrane. The protein resides in the nucleus. The enzyme catalyses ATP + H2O + closed Cl(-) channel = ADP + phosphate + open Cl(-) channel.. It carries out the reaction chloride(in) = chloride(out). The catalysed reaction is hydrogencarbonate(in) = hydrogencarbonate(out). It catalyses the reaction ATP + H2O = ADP + phosphate + H(+). Epithelial ion channel that plays an important role in the regulation of epithelial ion and water transport and fluid homeostasis. Mediates the transport of chloride ions across the cell membrane. Possesses an intrinsic ATPase activity and utilizes ATP to gate its channel; the passive flow of anions through the channel is gated by cycles of ATP binding and hydrolysis by the ATP-binding domains. The ion channel is also permeable to HCO(3)(-); selectivity depends on the extracellular chloride concentration. Exerts its function also by modulating the activity of other ion channels and transporters. Contributes to the regulation of the pH and the ion content of the epithelial fluid layer. Modulates the activity of the epithelial sodium channel (ENaC) complex, in part by regulating the cell surface expression of the ENaC complex. May regulate bicarbonate secretion and salvage in epithelial cells by regulating the transporter SLC4A7. Can inhibit the chloride channel activity of ANO1. Plays a role in the chloride and bicarbonate homeostasis during sperm epididymal maturation and capacitation. The polypeptide is Cystic fibrosis transmembrane conductance regulator (Rattus norvegicus (Rat)).